Consider the following 148-residue polypeptide: Transcriptional regulator MraZ (148 aa).

2 consecutive SpoVT-AbrB domains span residues 5–53 (ETAI…AEKE) and 82–125 (SAVL…SEQA).

The protein belongs to the MraZ family. In terms of assembly, forms oligomers.

It localises to the cytoplasm. The protein localises to the nucleoid. The sequence is that of Transcriptional regulator MraZ from Xanthomonas axonopodis pv. citri (strain 306).